The sequence spans 171 residues: Large ribosomal subunit protein bL17 (171 aa).

The span at 140-152 (KREIQTKAREEKR) shows a compositional bias: basic and acidic residues. Residues 140-171 (KREIQTKAREEKRATRKSNSAPVNKETTSKKK) form a disordered region. Residues 156–165 (KSNSAPVNKE) show a composition bias toward polar residues.

Belongs to the bacterial ribosomal protein bL17 family. Part of the 50S ribosomal subunit. Contacts protein L32.

The sequence is that of Large ribosomal subunit protein bL17 from Leptospira interrogans serogroup Icterohaemorrhagiae serovar Lai (strain 56601).